The sequence spans 245 residues: Leucyl/phenylalanyl-tRNA--protein transferase (245 aa).

It belongs to the L/F-transferase family.

Its subcellular location is the cytoplasm. It catalyses the reaction N-terminal L-lysyl-[protein] + L-leucyl-tRNA(Leu) = N-terminal L-leucyl-L-lysyl-[protein] + tRNA(Leu) + H(+). The catalysed reaction is N-terminal L-arginyl-[protein] + L-leucyl-tRNA(Leu) = N-terminal L-leucyl-L-arginyl-[protein] + tRNA(Leu) + H(+). It carries out the reaction L-phenylalanyl-tRNA(Phe) + an N-terminal L-alpha-aminoacyl-[protein] = an N-terminal L-phenylalanyl-L-alpha-aminoacyl-[protein] + tRNA(Phe). Functionally, functions in the N-end rule pathway of protein degradation where it conjugates Leu, Phe and, less efficiently, Met from aminoacyl-tRNAs to the N-termini of proteins containing an N-terminal arginine or lysine. The chain is Leucyl/phenylalanyl-tRNA--protein transferase from Paraburkholderia xenovorans (strain LB400).